The following is a 103-amino-acid chain: Probable protease inhibitor Egf0.4a (103 aa).

A signal peptide spans 1–22; the sequence is MMSEKFALVLLVACIAFIGIET. Positions 35 to 87 constitute a TIL domain; that stretch reads CGENEAYDSMRRGCEKRCDDHNPTFCFKFTTVCWCEKGYVRDKSDTCIKVEDC.

The protein belongs to the polydnaviridae EGF-like motif protein family.

The polypeptide is Probable protease inhibitor Egf0.4a (O4) (Microplitis demolitor (Parasitoid wasp)).